We begin with the raw amino-acid sequence, 473 residues long: Glutathione reductase, mitochondrial (473 aa).

Ser-30 and Gly-31 together coordinate FAD. Ser-30 contributes to the glutathione binding site. Arg-37 is a binding site for glutathione. Positions 50, 57, 58, and 66 each coordinate FAD. Cys-58 and Cys-63 are joined by a disulfide. Tyr-114 is a glutathione binding site. Ala-130 serves as a coordination point for FAD. NADP(+) is bound by residues Ala-190, Ile-193, Glu-196, Arg-213, Arg-219, and Gly-279. Asp-320 provides a ligand contact to FAD. Leu-326 lines the NADP(+) pocket. Residue Thr-328 coordinates FAD. Arg-336 contributes to the glutathione binding site. Val-359 lines the NADP(+) pocket. Position 456 (His-456) interacts with FAD. The Proton acceptor role is filled by His-456.

The protein belongs to the class-I pyridine nucleotide-disulfide oxidoreductase family. FAD serves as cofactor. In terms of tissue distribution, expressed at all larval stages and in adults in intestine, vulva muscle, pharynx and some cells in the tail.

The protein resides in the cytoplasm. The protein localises to the mitochondrion. It catalyses the reaction 2 glutathione + NADP(+) = glutathione disulfide + NADPH + H(+). Its function is as follows. Catalyzes the reduction of glutathione disulfide (GSSG) to reduced glutathione (GSH). Constitutes the major mechanism to maintain a high GSH:GSSG ratio in the cytosol. Involved in resistance to oxidative stress and starvation. Together with thioredoxin reductase txtr-1, required for the reduction of disulfide groups in the cuticle during molting. The protein is Glutathione reductase, mitochondrial of Caenorhabditis elegans.